Reading from the N-terminus, the 42-residue chain is Photosystem I reaction center subunit IX (42 aa).

The chain crosses the membrane as a helical span at residues 8–28 (YLSTAPVLFTVWLSFTASFII).

It belongs to the PsaJ family.

It is found in the plastid. It localises to the chloroplast thylakoid membrane. Its function is as follows. May help in the organization of the PsaE and PsaF subunits. The chain is Photosystem I reaction center subunit IX from Rhodomonas salina (Cryptomonas salina).